Consider the following 492-residue polypeptide: N-succinylglutamate 5-semialdehyde dehydrogenase (492 aa).

220 to 225 serves as a coordination point for NAD(+); the sequence is GSANTG. Catalysis depends on residues Glu243 and Cys277.

The protein belongs to the aldehyde dehydrogenase family. AstD subfamily.

The catalysed reaction is N-succinyl-L-glutamate 5-semialdehyde + NAD(+) + H2O = N-succinyl-L-glutamate + NADH + 2 H(+). The protein operates within amino-acid degradation; L-arginine degradation via AST pathway; L-glutamate and succinate from L-arginine: step 4/5. Functionally, catalyzes the NAD-dependent reduction of succinylglutamate semialdehyde into succinylglutamate. The chain is N-succinylglutamate 5-semialdehyde dehydrogenase from Escherichia coli O7:K1 (strain IAI39 / ExPEC).